Reading from the N-terminus, the 327-residue chain is Thiamine-binding periplasmic protein (327 aa).

The N-terminal stretch at 1–18 (MLKKCLPLLLLCTAPVFA) is a signal peptide. Thiamine contacts are provided by residues 59–60 (DG), 161–162 (ST), Trp-197, and 215–218 (YTTS).

This sequence belongs to the bacterial solute-binding protein 1 family. As to quaternary structure, monomer in solution. The complex is composed of two ATP-binding proteins (ThiQ), two transmembrane proteins (ThiP) and a solute-binding protein (ThiB).

It localises to the periplasm. With respect to regulation, transport is inhibited by the sulfhydryl-specific modifier N-ethylmaleimide. Functionally, part of the ABC transporter complex ThiBPQ involved in thiamine import. Binds thiamine, thiamine phosphate and thiamine diphosphate with high affinity. This Escherichia coli (strain K12) protein is Thiamine-binding periplasmic protein (thiB).